We begin with the raw amino-acid sequence, 159 residues long: Phosphopantetheine adenylyltransferase (159 aa).

Position 9 (S9) interacts with substrate. ATP-binding positions include 9 to 10 (SF) and H17. Substrate contacts are provided by K41, I75, and K89. Residues 90–92 (GLR), E100, and 124–130 (LEHISSS) contribute to the ATP site.

This sequence belongs to the bacterial CoaD family. As to quaternary structure, homohexamer. It depends on Mg(2+) as a cofactor.

The protein resides in the cytoplasm. It catalyses the reaction (R)-4'-phosphopantetheine + ATP + H(+) = 3'-dephospho-CoA + diphosphate. It functions in the pathway cofactor biosynthesis; coenzyme A biosynthesis; CoA from (R)-pantothenate: step 4/5. In terms of biological role, reversibly transfers an adenylyl group from ATP to 4'-phosphopantetheine, yielding dephospho-CoA (dPCoA) and pyrophosphate. In Bifidobacterium animalis subsp. lactis (strain AD011), this protein is Phosphopantetheine adenylyltransferase.